The chain runs to 321 residues: Sex-lethal homolog (321 aa).

RRM domains are found at residues 78 to 156 (TNLI…FARP) and 164 to 244 (TNLY…VAEE).

In terms of tissue distribution, expressed in gonads and somatic tissues of both sexes. In the ovary, expressed in the last egg chamber of each ovariole. Highly expressed in nurse cells with low expression found in oocytes. Highly expressed in testis with lower expression in testis sheath and vas deferentia.

The protein resides in the nucleus. Functionally, unknown; apparently not involved in somatic sex determination. The polypeptide is Sex-lethal homolog (SXL) (Megaselia scalaris (Humpbacked fly)).